The following is a 500-amino-acid chain: Aspartyl/glutamyl-tRNA(Asn/Gln) amidotransferase subunit B (500 aa).

This sequence belongs to the GatB/GatE family. GatB subfamily. As to quaternary structure, heterotrimer of A, B and C subunits.

It catalyses the reaction L-glutamyl-tRNA(Gln) + L-glutamine + ATP + H2O = L-glutaminyl-tRNA(Gln) + L-glutamate + ADP + phosphate + H(+). The catalysed reaction is L-aspartyl-tRNA(Asn) + L-glutamine + ATP + H2O = L-asparaginyl-tRNA(Asn) + L-glutamate + ADP + phosphate + 2 H(+). Its function is as follows. Allows the formation of correctly charged Asn-tRNA(Asn) or Gln-tRNA(Gln) through the transamidation of misacylated Asp-tRNA(Asn) or Glu-tRNA(Gln) in organisms which lack either or both of asparaginyl-tRNA or glutaminyl-tRNA synthetases. The reaction takes place in the presence of glutamine and ATP through an activated phospho-Asp-tRNA(Asn) or phospho-Glu-tRNA(Gln). This Thermosynechococcus vestitus (strain NIES-2133 / IAM M-273 / BP-1) protein is Aspartyl/glutamyl-tRNA(Asn/Gln) amidotransferase subunit B.